The following is a 255-amino-acid chain: Acetylglutamate kinase (255 aa).

Substrate contacts are provided by residues 40–41 (GG), arginine 62, and asparagine 153.

The protein belongs to the acetylglutamate kinase family. ArgB subfamily.

It is found in the cytoplasm. It carries out the reaction N-acetyl-L-glutamate + ATP = N-acetyl-L-glutamyl 5-phosphate + ADP. The protein operates within amino-acid biosynthesis; L-arginine biosynthesis; N(2)-acetyl-L-ornithine from L-glutamate: step 2/4. Functionally, catalyzes the ATP-dependent phosphorylation of N-acetyl-L-glutamate. This chain is Acetylglutamate kinase, found in Bacillus cereus (strain 03BB102).